We begin with the raw amino-acid sequence, 360 residues long: Phospho-N-acetylmuramoyl-pentapeptide-transferase (360 aa).

10 helical membrane passes run 25-45 (TGGA…WIID), 71-91 (TPTM…VLWA), 94-114 (LNPY…VGFY), 129-148 (SGRT…CYAL), 168-188 (TAIY…VGAG), 199-219 (GLAI…SYLA), 239-259 (LAVL…FNAP), 263-283 (IFMG…IAVA), 288-308 (FVLA…IVQV), and 337-357 (QIVI…LSTL).

Belongs to the glycosyltransferase 4 family. MraY subfamily. Mg(2+) is required as a cofactor.

It localises to the cell inner membrane. It carries out the reaction UDP-N-acetyl-alpha-D-muramoyl-L-alanyl-gamma-D-glutamyl-meso-2,6-diaminopimeloyl-D-alanyl-D-alanine + di-trans,octa-cis-undecaprenyl phosphate = di-trans,octa-cis-undecaprenyl diphospho-N-acetyl-alpha-D-muramoyl-L-alanyl-D-glutamyl-meso-2,6-diaminopimeloyl-D-alanyl-D-alanine + UMP. The protein operates within cell wall biogenesis; peptidoglycan biosynthesis. Catalyzes the initial step of the lipid cycle reactions in the biosynthesis of the cell wall peptidoglycan: transfers peptidoglycan precursor phospho-MurNAc-pentapeptide from UDP-MurNAc-pentapeptide onto the lipid carrier undecaprenyl phosphate, yielding undecaprenyl-pyrophosphoryl-MurNAc-pentapeptide, known as lipid I. This chain is Phospho-N-acetylmuramoyl-pentapeptide-transferase, found in Rhodopseudomonas palustris (strain BisA53).